A 142-amino-acid polypeptide reads, in one-letter code: Pro-vaccinia growth factor (142 aa).

The signal sequence occupies residues 1–18 (MSMKYLMLLFAAMIIRSF). Topologically, residues 19–100 (ADSGNAIETT…SENPNTTTSY (82 aa)) are extracellular. Asn-34 carries an N-linked (GlcNAc...) asparagine; by host glycan. Positions 41 to 81 (AIRLCGPEGDGYCLHGDCIHARDIDGMYCRCSHGYTGIRCQ) constitute an EGF-like domain. 3 disulfide bridges follow: Cys-45–Cys-58, Cys-53–Cys-69, and Cys-71–Cys-80. Residue Asn-95 is glycosylated (N-linked (GlcNAc...) asparagine; by host). The helical transmembrane segment at 101-121 (IPSPGIMLVLVGIIIIITCCL) threads the bilayer. At 122 to 142 (LSVYRFTRRTNKLPLQDMVVP) the chain is on the cytoplasmic side.

The protein belongs to the orthopoxvirus OPG019 family. In terms of assembly, vaccinia growth factor interacts with host EGFR and promotes EGFR dimerization.

The protein localises to the host membrane. Its subcellular location is the secreted. In terms of biological role, stimulates cellular proliferation (hyperplasia)and mobility around infected cells to promote rapid and efficient spread of infection. This effect is beneficial for virus replication in vivo, because poxviruses replicate possibly better in proliferating cells than in quiescent cells. Acts by binding host EGFR, inducing its dimerization, autophosphorylation and leading to activation of several cellular pathways regulating cell proliferation or cell survival. The activation by host EGFR of mitogen activated protein kinases (MAPK) and extracellular-signal regulated kinases (ERK) are essential for the positive effect of vaccinia growth factor on poxvirus virulence in vivo. This is Pro-vaccinia growth factor (OPG019) from Vaccinia virus (strain Copenhagen) (VACV).